The sequence spans 362 residues: Phospho-N-acetylmuramoyl-pentapeptide-transferase (362 aa).

10 helical membrane passes run alanine 28–leucine 48, glycine 72–tryptophan 92, valine 100–leucine 120, valine 134–threonine 154, valine 170–serine 190, glycine 201–valine 221, leucine 241–proline 261, valine 265–alanine 285, isoleucine 290–valine 310, and threonine 339–leucine 359.

The protein belongs to the glycosyltransferase 4 family. MraY subfamily. The cofactor is Mg(2+).

The protein resides in the cell inner membrane. It catalyses the reaction UDP-N-acetyl-alpha-D-muramoyl-L-alanyl-gamma-D-glutamyl-meso-2,6-diaminopimeloyl-D-alanyl-D-alanine + di-trans,octa-cis-undecaprenyl phosphate = di-trans,octa-cis-undecaprenyl diphospho-N-acetyl-alpha-D-muramoyl-L-alanyl-D-glutamyl-meso-2,6-diaminopimeloyl-D-alanyl-D-alanine + UMP. It functions in the pathway cell wall biogenesis; peptidoglycan biosynthesis. Functionally, catalyzes the initial step of the lipid cycle reactions in the biosynthesis of the cell wall peptidoglycan: transfers peptidoglycan precursor phospho-MurNAc-pentapeptide from UDP-MurNAc-pentapeptide onto the lipid carrier undecaprenyl phosphate, yielding undecaprenyl-pyrophosphoryl-MurNAc-pentapeptide, known as lipid I. This is Phospho-N-acetylmuramoyl-pentapeptide-transferase from Granulibacter bethesdensis (strain ATCC BAA-1260 / CGDNIH1).